The chain runs to 288 residues: ATP synthase gamma chain (288 aa).

This sequence belongs to the ATPase gamma chain family. In terms of assembly, F-type ATPases have 2 components, CF(1) - the catalytic core - and CF(0) - the membrane proton channel. CF(1) has five subunits: alpha(3), beta(3), gamma(1), delta(1), epsilon(1). CF(0) has three main subunits: a, b and c.

It localises to the cell inner membrane. Its function is as follows. Produces ATP from ADP in the presence of a proton gradient across the membrane. The gamma chain is believed to be important in regulating ATPase activity and the flow of protons through the CF(0) complex. This is ATP synthase gamma chain from Vibrio parahaemolyticus serotype O3:K6 (strain RIMD 2210633).